We begin with the raw amino-acid sequence, 362 residues long: Solute carrier family 25 member 3 (362 aa).

Residues 1-49 (MYSSVVHLARANPFNAPHLQLVHDGLAGPRSDPAGPPGPPRRSRNLAAA) constitute a mitochondrion transit peptide. Residues 50 to 63 (AVEEQYSCDYGSGR) lie on the Mitochondrial intermembrane side of the membrane. 3 Solcar repeats span residues 63-147 (RFFI…FKVL), 160-244 (WRTS…TVEA), and 261-339 (EQLV…VKVY). Residues 64-86 (FFILCGLGGIISCGTTHTALVPL) traverse the membrane as a helical segment. The Mitochondrial matrix segment spans residues 87–121 (DLVKCRMQVDPQKYKSIFNGFSVTLKEDGFRGLAK). K99 carries the post-translational modification N6-acetyllysine. K112 is modified (N6-methyllysine). A helical membrane pass occupies residues 122-141 (GWAPTFIGYSLQGLCKFGFY). Residues 142 to 161 (EVFKVLYSNMLGEENAYLWR) lie on the Mitochondrial intermembrane side of the membrane. A helical membrane pass occupies residues 162-183 (TSLYLAASASAEFFADIALAPM). Over 184-218 (EAAKVRIQTQPGYANTLRDAAPKMYKEEGLKAFYK) the chain is Mitochondrial matrix. Residue Y196 is modified to Phosphotyrosine. N6-acetyllysine is present on K209. A helical membrane pass occupies residues 219 to 238 (GVAPLWMRQIPYTMMKFACF). Topologically, residues 239–261 (ERTVEALYKFVVPKPRSECSKPE) are mitochondrial intermembrane. A helical membrane pass occupies residues 262 to 284 (QLVVTFVAGYIAGVFCAIVSHPA). Residues 285 to 314 (DSVVSVLNKEKGSSASEVLKRLGFRGVWKG) are Mitochondrial matrix-facing. Residues 315–333 (LFARIIMIGTLTALQWFIY) traverse the membrane as a helical segment. At 334-362 (DSVKVYFRLPRPPPPEMPESLKKKLGYTQ) the chain is on the mitochondrial intermembrane side.

It belongs to the mitochondrial carrier (TC 2.A.29) family. Interacts with PPIF; the interaction is impaired by CsA. In terms of tissue distribution, expressed in heart, diaphragm and skeletal muscle (at protein level). Not detected in liver, lung, brain, and kidney (at protein level). Ubiquitous (at protein level).

It localises to the mitochondrion inner membrane. It carries out the reaction phosphate(in) + H(+)(in) = phosphate(out) + H(+)(out). Its activity is regulated as follows. Up-regulated in the presence of cardiolipin. Its function is as follows. Inorganic ion transporter that transports phosphate or copper ions across the mitochondrial inner membrane into the matrix compartment. Mediates proton-coupled symport of phosphate ions necessary for mitochondrial oxidative phosphorylation of ADP to ATP. Transports copper ions probably in the form of anionic copper(I) complexes to maintain mitochondrial matrix copper pool and to supply copper for cytochrome C oxidase complex assembly. May also play a role in regulation of the mitochondrial permeability transition pore (mPTP). This is Solute carrier family 25 member 3 from Bos taurus (Bovine).